The primary structure comprises 63 residues: Conotoxin Pu5.4 (63 aa).

A signal peptide spans 1-22 (MRCVPVFVILLLLIASTPSVDA). Residues 23–50 (TQKTKDDMSLASFHDNAKRFLQTLRNTR) constitute a propeptide that is removed on maturation. Residue W62 is modified to Tryptophan amide.

This sequence belongs to the conotoxin T superfamily. In terms of processing, contains 2 disulfide bonds that can be either 'C1-C3, C2-C4' or 'C1-C4, C2-C3', since these disulfide connectivities have been observed for conotoxins with cysteine framework V (for examples, see AC P0DQQ7 and AC P81755). As to expression, expressed by the venom duct.

The protein resides in the secreted. The sequence is that of Conotoxin Pu5.4 from Conus pulicarius (Flea-bitten cone).